We begin with the raw amino-acid sequence, 130 residues long: Small ribosomal subunit protein uS9 (130 aa).

This sequence belongs to the universal ribosomal protein uS9 family.

This is Small ribosomal subunit protein uS9 from Bacillus mycoides (strain KBAB4) (Bacillus weihenstephanensis).